A 138-amino-acid chain; its full sequence is Large ribosomal subunit protein uL16 (138 aa).

A compositionally biased stretch (basic residues) spans 1-13 (MLQPKRRKYRKEQ). Positions 1 to 24 (MLQPKRRKYRKEQKGRNTGKATRG) are disordered.

It belongs to the universal ribosomal protein uL16 family. As to quaternary structure, part of the 50S ribosomal subunit.

Functionally, binds 23S rRNA and is also seen to make contacts with the A and possibly P site tRNAs. This chain is Large ribosomal subunit protein uL16, found in Burkholderia ambifaria (strain ATCC BAA-244 / DSM 16087 / CCUG 44356 / LMG 19182 / AMMD) (Burkholderia cepacia (strain AMMD)).